The following is a 386-amino-acid chain: Cobalt-precorrin-5B C(1)-methyltransferase (386 aa).

Belongs to the CbiD family.

The catalysed reaction is Co-precorrin-5B + S-adenosyl-L-methionine = Co-precorrin-6A + S-adenosyl-L-homocysteine. It participates in cofactor biosynthesis; adenosylcobalamin biosynthesis; cob(II)yrinate a,c-diamide from sirohydrochlorin (anaerobic route): step 6/10. In terms of biological role, catalyzes the methylation of C-1 in cobalt-precorrin-5B to form cobalt-precorrin-6A. This Prochlorococcus marinus (strain MIT 9303) protein is Cobalt-precorrin-5B C(1)-methyltransferase.